Here is a 236-residue protein sequence, read N- to C-terminus: V-set and transmembrane domain-containing protein 1 (236 aa).

Residues Met1–Gly16 form the signal peptide. Over Tyr17 to Thr135 the chain is Extracellular. One can recognise an Ig-like V-type domain in the interval Pro27–Gln114. Asn44 and Asn55 each carry an N-linked (GlcNAc...) asparagine glycan. A disulfide bond links Cys49 and Cys96. The chain crosses the membrane as a helical span at residues Ile136–Ile156. Residues Tyr157–Val236 lie on the Cytoplasmic side of the membrane. Residues Ser166 to Asp200 form a disordered region. 2 short sequence motifs (ITIM motif) span residues Val204–Leu209 and His229–Leu234. Residues Ser215–Val236 are disordered.

In terms of processing, isoform 2 is N-glycosylated. As to expression, expressed on myeloid (neutrophils, eosinophils and monocytes) but not on lymphoid cells.

The protein localises to the membrane. It is found in the secreted. In terms of biological role, behaves as a cytokine, promoting IL17A secretion by CD4+ T-cells, and differentiation and activation of IL17 producing helper T-cells (TH17). Its function is as follows. Inhibitory immune receptor involved in the regulation of phagocytes. This chain is V-set and transmembrane domain-containing protein 1 (VSTM1), found in Homo sapiens (Human).